The chain runs to 70 residues: Cold shock-like protein CspJ (70 aa).

Residues 7-67 (GLVKWFNPEK…GPKGPSAVNV (61 aa)) form the CSD domain.

It is found in the cytoplasm. This chain is Cold shock-like protein CspJ (cspJ), found in Salmonella typhi.